A 358-amino-acid polypeptide reads, in one-letter code: MFDQLDIVEERYEQLNELLSDPDVVNDSDKLRKYSKEQADLQKTVDVYRNYKAKKEELADIEEMLSETDDKEEVEMLKEESNGIKAELPNLEEELKILLIPKDPNDDKDVIVEIRAAAGGDEAAIFAGDLMRMYSKYAESQGFKTEIVEASESDHGGYKEISFSVSGNGAYSKLKFENGAHRVQRVPETESGGRIHTSTATVAVLPEVEDVEIEIRNEDLKIDTYRSSGAGGQHVNTTDSAVRITHLPTGVIATSSEKSQIQNREKAMKVLKARLYDMKVQEEQQKYASQRKSAVGTGDRSERIRTYNYPQSRVTDHRIGLTLQKLGQIMEGHLEEIIDALTLSEQTDKLKELNNGEL.

An N5-methylglutamine modification is found at Q233.

Belongs to the prokaryotic/mitochondrial release factor family. Methylated by PrmC. Methylation increases the termination efficiency of RF1.

The protein localises to the cytoplasm. Functionally, peptide chain release factor 1 directs the termination of translation in response to the peptide chain termination codons UAG and UAA. This is Peptide chain release factor 1 from Staphylococcus aureus (strain MSSA476).